The chain runs to 565 residues: Protein nucleotidyltransferase YdiU (565 aa).

Positions 118, 120, 121, 141, 153, 154, 211, and 218 each coordinate ATP. Catalysis depends on D290, which acts as the Proton acceptor. Mg(2+) contacts are provided by N291 and D300. D300 contributes to the ATP binding site.

This sequence belongs to the SELO family. It depends on Mg(2+) as a cofactor. The cofactor is Mn(2+).

It catalyses the reaction L-seryl-[protein] + ATP = 3-O-(5'-adenylyl)-L-seryl-[protein] + diphosphate. The catalysed reaction is L-threonyl-[protein] + ATP = 3-O-(5'-adenylyl)-L-threonyl-[protein] + diphosphate. The enzyme catalyses L-tyrosyl-[protein] + ATP = O-(5'-adenylyl)-L-tyrosyl-[protein] + diphosphate. It carries out the reaction L-histidyl-[protein] + UTP = N(tele)-(5'-uridylyl)-L-histidyl-[protein] + diphosphate. It catalyses the reaction L-seryl-[protein] + UTP = O-(5'-uridylyl)-L-seryl-[protein] + diphosphate. The catalysed reaction is L-tyrosyl-[protein] + UTP = O-(5'-uridylyl)-L-tyrosyl-[protein] + diphosphate. Its function is as follows. Nucleotidyltransferase involved in the post-translational modification of proteins. It can catalyze the addition of adenosine monophosphate (AMP) or uridine monophosphate (UMP) to a protein, resulting in modifications known as AMPylation and UMPylation. In Nitrosospira multiformis (strain ATCC 25196 / NCIMB 11849 / C 71), this protein is Protein nucleotidyltransferase YdiU.